We begin with the raw amino-acid sequence, 394 residues long: Elongation factor Tu (394 aa).

The region spanning Lys10–Arg205 is the tr-type G domain. Positions Gly19–Thr26 are G1. Gly19–Thr26 contacts GTP. Residue Thr26 participates in Mg(2+) binding. The G2 stretch occupies residues Gly60–Asn64. The tract at residues Asp81–Gly84 is G3. GTP-binding positions include Asp81–His85 and Asn136–Asp139. Residues Asn136–Asp139 form a G4 region. The segment at Ser174–Leu176 is G5.

Belongs to the TRAFAC class translation factor GTPase superfamily. Classic translation factor GTPase family. EF-Tu/EF-1A subfamily. Monomer.

The protein localises to the cytoplasm. It carries out the reaction GTP + H2O = GDP + phosphate + H(+). Functionally, GTP hydrolase that promotes the GTP-dependent binding of aminoacyl-tRNA to the A-site of ribosomes during protein biosynthesis. This is Elongation factor Tu from Bacteroides thetaiotaomicron (strain ATCC 29148 / DSM 2079 / JCM 5827 / CCUG 10774 / NCTC 10582 / VPI-5482 / E50).